The sequence spans 289 residues: Protoheme IX farnesyltransferase 2 (289 aa).

9 helical membrane passes run 13-33 (LEIT…VPGS), 37-57 (IYDL…ASIF), 86-106 (LFFI…FILL), 109-129 (VTSA…TIIL), 137-157 (IVIG…SITG), 159-179 (VSAT…THFW), 207-227 (EFWI…PLFI), 232-252 (VGLL…YYVA), and 267-287 (AFHF…LILV).

The protein belongs to the UbiA prenyltransferase family. Protoheme IX farnesyltransferase subfamily.

It localises to the cell membrane. The catalysed reaction is heme b + (2E,6E)-farnesyl diphosphate + H2O = Fe(II)-heme o + diphosphate. Its pathway is porphyrin-containing compound metabolism; heme O biosynthesis; heme O from protoheme: step 1/1. Its function is as follows. Converts heme B (protoheme IX) to heme O by substitution of the vinyl group on carbon 2 of heme B porphyrin ring with a hydroxyethyl farnesyl side group. In Picrophilus torridus (strain ATCC 700027 / DSM 9790 / JCM 10055 / NBRC 100828 / KAW 2/3), this protein is Protoheme IX farnesyltransferase 2.